The chain runs to 339 residues: Ferredoxin--NADP reductase (339 aa).

FAD contacts are provided by aspartate 32, glutamine 40, tyrosine 45, valine 85, phenylalanine 120, aspartate 287, and threonine 327.

The protein belongs to the ferredoxin--NADP reductase type 2 family. In terms of assembly, homodimer. It depends on FAD as a cofactor.

It carries out the reaction 2 reduced [2Fe-2S]-[ferredoxin] + NADP(+) + H(+) = 2 oxidized [2Fe-2S]-[ferredoxin] + NADPH. This is Ferredoxin--NADP reductase from Wolbachia sp. subsp. Brugia malayi (strain TRS).